Here is a 77-residue protein sequence, read N- to C-terminus: UPF0401 protein c0279 (77 aa).

This sequence belongs to the UPF0401 family.

This is UPF0401 protein c0279 from Escherichia coli O6:H1 (strain CFT073 / ATCC 700928 / UPEC).